Here is a 355-residue protein sequence, read N- to C-terminus: Probable butyrate kinase (355 aa).

The protein belongs to the acetokinase family.

It localises to the cytoplasm. It carries out the reaction butanoate + ATP = butanoyl phosphate + ADP. The chain is Probable butyrate kinase from Listeria monocytogenes serovar 1/2a (strain ATCC BAA-679 / EGD-e).